Consider the following 279-residue polypeptide: Thymidylate synthase (279 aa).

R37 is a binding site for dUMP. H67 lines the (6R)-5,10-methylene-5,6,7,8-tetrahydrofolate pocket. Position 142–143 (142–143 (RR)) interacts with dUMP. C162 acts as the Nucleophile in catalysis. DUMP-binding positions include 182 to 185 (RSAD), N193, and 223 to 225 (HLY). (6R)-5,10-methylene-5,6,7,8-tetrahydrofolate is bound at residue D185. S278 contacts (6R)-5,10-methylene-5,6,7,8-tetrahydrofolate.

It belongs to the thymidylate synthase family. Bacterial-type ThyA subfamily. Homodimer.

It localises to the cytoplasm. It catalyses the reaction dUMP + (6R)-5,10-methylene-5,6,7,8-tetrahydrofolate = 7,8-dihydrofolate + dTMP. It participates in pyrimidine metabolism; dTTP biosynthesis. Functionally, catalyzes the reductive methylation of 2'-deoxyuridine-5'-monophosphate (dUMP) to 2'-deoxythymidine-5'-monophosphate (dTMP) while utilizing 5,10-methylenetetrahydrofolate (mTHF) as the methyl donor and reductant in the reaction, yielding dihydrofolate (DHF) as a by-product. This enzymatic reaction provides an intracellular de novo source of dTMP, an essential precursor for DNA biosynthesis. The chain is Thymidylate synthase from Caulobacter vibrioides (strain ATCC 19089 / CIP 103742 / CB 15) (Caulobacter crescentus).